A 133-amino-acid chain; its full sequence is Small ribosomal subunit protein uS11 (133 aa).

This sequence belongs to the universal ribosomal protein uS11 family. Part of the 30S ribosomal subunit. Interacts with proteins S7 and S18. Binds to IF-3.

Located on the platform of the 30S subunit, it bridges several disparate RNA helices of the 16S rRNA. Forms part of the Shine-Dalgarno cleft in the 70S ribosome. This is Small ribosomal subunit protein uS11 from Bordetella avium (strain 197N).